The sequence spans 736 residues: NADPH--cytochrome P450 reductase (736 aa).

Position 1 (methionine 1) is a topological domain, lumenal. Residues 2 to 24 (AVSSSSDVIVLSVGIILAALYLF) traverse the membrane as a helical segment. The Cytoplasmic segment spans residues 25 to 736 (REQIFSAAKP…RNRLLLDVWS (712 aa)). The Flavodoxin-like domain maps to 66–216 (IVIFYGSQTG…DYLEWKDGMW (151 aa)). FMN contacts are provided by residues 72–77 (SQTGTA), 123–126 (ATYG), 165–174 (LGNKTYEHYN), and aspartate 200. An FAD-binding FR-type domain is found at 269–546 (KNPYPAPIIA…EGPRGAYKQG (278 aa)). Arginine 289 contacts NADP(+). FAD contacts are provided by residues 456–459 (RYYS), 474–476 (TVV), tyrosine 480, and 495–498 (GVGS). NADP(+)-binding positions include threonine 577, 648–649 (SR), and 659–663 (KIYVQ). An FAD-binding site is contributed by tryptophan 735.

It belongs to the NADPH--cytochrome P450 reductase family. In the N-terminal section; belongs to the flavodoxin family. The protein in the C-terminal section; belongs to the flavoprotein pyridine nucleotide cytochrome reductase family. It depends on FAD as a cofactor. FMN serves as cofactor.

It is found in the endoplasmic reticulum membrane. Its subcellular location is the mitochondrion outer membrane. It localises to the cell membrane. It catalyses the reaction 2 oxidized [cytochrome P450] + NADPH = 2 reduced [cytochrome P450] + NADP(+) + H(+). In terms of biological role, this enzyme is required for electron transfer from NADP to cytochrome P450 in microsomes. It can also provide electron transfer to heme oxygenase and cytochrome B5. Involved in ergosterol biosynthesis. This chain is NADPH--cytochrome P450 reductase (CPR), found in Phanerodontia chrysosporium (White-rot fungus).